Consider the following 217-residue polypeptide: Uracil-DNA glycosylase (217 aa).

The Proton acceptor role is filled by aspartate 62.

The protein belongs to the uracil-DNA glycosylase (UDG) superfamily. UNG family.

It is found in the cytoplasm. It carries out the reaction Hydrolyzes single-stranded DNA or mismatched double-stranded DNA and polynucleotides, releasing free uracil.. Its function is as follows. Excises uracil residues from the DNA which can arise as a result of misincorporation of dUMP residues by DNA polymerase or due to deamination of cytosine. The protein is Uracil-DNA glycosylase of Streptococcus pyogenes serotype M4 (strain MGAS10750).